Here is a 297-residue protein sequence, read N- to C-terminus: Nitrogenase iron protein 2 (297 aa).

14 to 21 contributes to the ATP binding site; sequence GKGGIGKS. Cys-102 is a [4Fe-4S] cluster binding site. The residue at position 105 (Arg-105) is an ADP-ribosylarginine; by dinitrogenase reductase ADP-ribosyltransferase. Cys-136 is a [4Fe-4S] cluster binding site.

Belongs to the NifH/BchL/ChlL family. In terms of assembly, homodimer. [4Fe-4S] cluster serves as cofactor. Post-translationally, the reversible ADP-ribosylation of Arg-105 inactivates the nitrogenase reductase and regulates nitrogenase activity.

The catalysed reaction is N2 + 8 reduced [2Fe-2S]-[ferredoxin] + 16 ATP + 16 H2O = H2 + 8 oxidized [2Fe-2S]-[ferredoxin] + 2 NH4(+) + 16 ADP + 16 phosphate + 6 H(+). In terms of biological role, the key enzymatic reactions in nitrogen fixation are catalyzed by the nitrogenase complex, which has 2 components: the iron protein and the molybdenum-iron protein. In Nostoc sp. (strain PCC 7120 / SAG 25.82 / UTEX 2576), this protein is Nitrogenase iron protein 2 (nifH2).